A 181-amino-acid chain; its full sequence is Anthrone oxygenase encC (181 aa).

The next 4 helical transmembrane spans lie at 1–21, 65–81, 88–108, and 153–173; these read MASVQGLIKIVAITGGVWLSG, QIAACTSTAFAYLAWCA, LLYGTAACSVMGIVPYTLLFM, and FLAGIRGLLPLAGGILGLFAA.

The protein belongs to the anthrone oxygenase family. In terms of tissue distribution, endocrocin is specifically produced in conidia.

The protein resides in the membrane. Its function is as follows. Anthrone oxygenase; part of the gene cluster that mediates the biosynthesis of endocrocin, a simple anthraquinone interesting for many biotechnological applications. The pathway begins with the synthesis of atrochrysone thioester by the polyketide synthase (PKS) encA. The atrochrysone carboxyl ACP thioesterase encB then breaks the thioester bond and releases the atrochrysone carboxylic acid from encA. The atrochrysone carboxylic acid is then converted to endocrocin anthrone which is further oxidized into endocrocin by the anthrone oxygenase encC. The exact function of encD has not been identified yet, but it negatively regulates endocrocin production, likely through the modification of endocrocin itself. This is Anthrone oxygenase encC from Aspergillus fumigatus (strain ATCC MYA-4609 / CBS 101355 / FGSC A1100 / Af293) (Neosartorya fumigata).